The following is a 317-amino-acid chain: Ricin B-like lectin EULS3 (317 aa).

Basic residues predominate over residues 1-11 (MEHHHQHHRHH). The interval 1–157 (MEHHHQHHRH…YHKPDENRLP (157 aa)) is disordered. Over residues 25-36 (VPPPHVDAPPQP) the composition is skewed to pro residues. The segment covering 136 to 146 (HSSNQPQSSSG) has biased composition (polar residues). Residues 168–315 (TVKVYSKAEP…KGDNQLWKIF (148 aa)) enclose the Ricin B-type lectin domain.

Interacts (via N-terminus) with ATS3A and ATS3B. As to expression, expressed in roots, rosette leaves, stems, cauline leaves and flowers.

It localises to the nucleus. Its subcellular location is the cytoplasm. Lectin which binds carbohydrates in vitro. Interacts through its lectin domain with glycan structures containing one or more Lewis X, Lewis Y or lactosamine motifs. May play a role in abiotic stress responses. May play a role in abscisic acid-induced stomatal closure. May play a role in disease resistance against Pseudomonas syringae through its involvement in stomatal movement. The sequence is that of Ricin B-like lectin EULS3 from Arabidopsis thaliana (Mouse-ear cress).